Consider the following 387-residue polypeptide: 3-ketoacyl-CoA thiolase (387 aa).

The Acyl-thioester intermediate role is filled by Cys-91. Catalysis depends on proton acceptor residues His-343 and Cys-373.

The protein belongs to the thiolase-like superfamily. Thiolase family. Heterotetramer of two alpha chains (FadB) and two beta chains (FadA).

It localises to the cytoplasm. It catalyses the reaction an acyl-CoA + acetyl-CoA = a 3-oxoacyl-CoA + CoA. It functions in the pathway lipid metabolism; fatty acid beta-oxidation. In terms of biological role, catalyzes the final step of fatty acid oxidation in which acetyl-CoA is released and the CoA ester of a fatty acid two carbons shorter is formed. This is 3-ketoacyl-CoA thiolase from Escherichia coli O139:H28 (strain E24377A / ETEC).